Consider the following 526-residue polypeptide: Peptide chain release factor 3 (526 aa).

The tr-type G domain maps to 11 to 277 (SKRRTFAIIS…SLIKWAPSPL (267 aa)). GTP contacts are provided by residues 20–27 (SHPDAGKT), 88–92 (DTPGH), and 142–145 (NKLD).

It belongs to the TRAFAC class translation factor GTPase superfamily. Classic translation factor GTPase family. PrfC subfamily.

Its subcellular location is the cytoplasm. In terms of biological role, increases the formation of ribosomal termination complexes and stimulates activities of RF-1 and RF-2. It binds guanine nucleotides and has strong preference for UGA stop codons. It may interact directly with the ribosome. The stimulation of RF-1 and RF-2 is significantly reduced by GTP and GDP, but not by GMP. The polypeptide is Peptide chain release factor 3 (Buchnera aphidicola subsp. Acyrthosiphon pisum (strain 5A)).